The chain runs to 763 residues: 5-methyltetrahydropteroyltriglutamate--homocysteine methyltransferase (763 aa).

Residues 16 to 19 (RELK) and Lys-117 each bind 5-methyltetrahydropteroyltri-L-glutamate. L-homocysteine is bound by residues 438-440 (IGS) and Glu-491. Residues 438 to 440 (IGS) and Glu-491 each bind L-methionine. 5-methyltetrahydropteroyltri-L-glutamate contacts are provided by residues 522 to 523 (RC) and Trp-568. L-homocysteine is bound at residue Asp-606. Asp-606 provides a ligand contact to L-methionine. Glu-612 serves as a coordination point for 5-methyltetrahydropteroyltri-L-glutamate. Residues His-648, Cys-650, and Glu-672 each contribute to the Zn(2+) site. His-701 functions as the Proton donor in the catalytic mechanism. Zn(2+) is bound at residue Cys-733.

Belongs to the vitamin-B12 independent methionine synthase family. Zn(2+) serves as cofactor.

It carries out the reaction 5-methyltetrahydropteroyltri-L-glutamate + L-homocysteine = tetrahydropteroyltri-L-glutamate + L-methionine. It functions in the pathway amino-acid biosynthesis; L-methionine biosynthesis via de novo pathway; L-methionine from L-homocysteine (MetE route): step 1/1. Functionally, catalyzes the transfer of a methyl group from 5-methyltetrahydrofolate to homocysteine resulting in methionine formation. The polypeptide is 5-methyltetrahydropteroyltriglutamate--homocysteine methyltransferase (Pseudomonas paraeruginosa (strain DSM 24068 / PA7) (Pseudomonas aeruginosa (strain PA7))).